Consider the following 1302-residue polypeptide: 1-phosphatidylinositol 4,5-bisphosphate phosphodiesterase gamma-1 (1302 aa).

N-acetylalanine is present on Ala-2. The 116-residue stretch at 27–142 folds into the PH 1 domain; sequence RSLEVGTVMT…WIKGLTWLME (116 aa). Residues 152 to 187 enclose the EF-hand domain; sequence QIERWLRKQFYSVDRNREDRISAKDLKNMLSQVNYR. The Ca(2+) site is built by Asp-165, Asn-167, Glu-169, Arg-171, and Asp-176. In terms of domain architecture, PI-PLC X-box spans 320-464; that stretch reads DTMNNPLSHY…LRRKILIKHK (145 aa). Active-site residues include His-335 and His-380. Residues 489–523 enclose the PH 2; first part domain; it reads SIKNGILYLEDPVNHEWYPHYFVLTSSKIYYSEET. Tyr-506 is modified (phosphotyrosine). Positions 522–545 are disordered; that stretch reads ETSSDQGNEDEEEPKEASSSTELH. 2 consecutive SH2 domains span residues 550-657 and 668-756; these read WFHG…SEPV and WYHA…RYPI. Tyr-771 is modified (phosphotyrosine; by SYK). A Phosphotyrosine modification is found at Tyr-775. Tyr-783 carries the post-translational modification Phosphotyrosine; by ITK, SYK and TXK. Residues 791–851 enclose the SH3 domain; that stretch reads TFKCAVKALF…PSNYVEEMIN (61 aa). One can recognise a PH 2; second part domain in the interval 895–931; that stretch reads FVFSISMPSVAQWSLDVAADSQEELQDWVKKIREVAQ. Positions 953 to 1070 constitute a PI-PLC Y-box domain; sequence LSELVVYCRP…GYVLQPSTMR (118 aa). Tyr-977 carries the post-translational modification Phosphotyrosine. The region spanning 1071 to 1194 is the C2 domain; sequence DEAFDPFDKS…TGYRAVPLKN (124 aa). Phosphoserine occurs at positions 1221, 1227, 1233, and 1248. Tyr-1253 bears the Phosphotyrosine mark. Ser-1263 is subject to Phosphoserine.

Interacts (via SH2 domain) with FGFR1, FGFR2, FGFR3 and FGFR4 (phosphorylated). Interacts with RALGPS1. Interacts (via SH2 domains) with VIL1 (phosphorylated at C-terminus tyrosine phosphorylation sites). Interacts (via SH2 domain) with RET. Interacts with AGAP2 via its SH3 domain. Interacts with LAT (phosphorylated) upon TCR activation. Interacts (via SH3 domain) with the Pro-rich domain of TNK1. Associates with BLNK, VAV1, GRB2 and NCK1 in a B-cell antigen receptor-dependent fashion. Interacts with CBLB in activated T-cells; which inhibits phosphorylation. Interacts with SHB. Interacts (via SH3 domain) with the Arg/Gly-rich-flanked Pro-rich domains of KHDRBS1/SAM68. This interaction is selectively regulated by arginine methylation of KHDRBS1/SAM68. Interacts with INPP5D/SHIP1, THEMIS and CLNK. Interacts with FLT4 and KIT. Interacts with AXL. Interacts with SYK; activates PLCG1. Interacts with FLT1 (tyrosine-phosphorylated). Interacts (via SH2 domain) with PDGFRA and PDGFRB (tyrosine phosphorylated). Interacts with PIP5K1C. Interacts with NTRK1 and NTRK2 (phosphorylated upon ligand-binding). Interacts with TESPA1. Interacts with GRB2, LAT and THEMIS upon TCR activation in thymocytes; the association is weaker in the absence of TESPA1. Interacts (via C-terminal proline-rich domain (PRD)) with PLCG1 (via SH3 domain); this interaction leads to guanine nucleotide exchange from PlCG1 to DNM1 and enhances DNM1-dependent endocytosis. It depends on Ca(2+) as a cofactor. In terms of processing, tyrosine phosphorylated in response to signaling via activated FLT3, KIT and PDGFRA. Tyrosine phosphorylated by activated FGFR1, FGFR2, FGFR3 and FGFR4. Tyrosine phosphorylated by activated FLT1 and KDR. Tyrosine phosphorylated by activated PDGFRB. The receptor-mediated activation of PLCG1 involves its phosphorylation by tyrosine kinases in response to ligation of a variety of growth factor receptors and immune system receptors. For instance, SYK phosphorylates and activates PLCG1 in response to ligation of the B-cell receptor. Phosphorylated by ITK and TXK on Tyr-783 upon TCR activation in T-cells. May be dephosphorylated by PTPRJ. Ubiquitinated by CBLB in activated T-cells.

It localises to the cell projection. The protein localises to the lamellipodium. It is found in the ruffle. The enzyme catalyses a 1,2-diacyl-sn-glycero-3-phospho-(1D-myo-inositol-4,5-bisphosphate) + H2O = 1D-myo-inositol 1,4,5-trisphosphate + a 1,2-diacyl-sn-glycerol + H(+). The catalysed reaction is a 1,2-diacyl-sn-glycero-3-phospho-(1D-myo-inositol) + H2O = 1D-myo-inositol 1-phosphate + a 1,2-diacyl-sn-glycerol + H(+). With respect to regulation, activated by phosphorylation on tyrosine residues. In terms of biological role, mediates the production of the second messenger molecules diacylglycerol (DAG) and inositol 1,4,5-trisphosphate (IP3). Plays an important role in the regulation of intracellular signaling cascades. Becomes activated in response to ligand-mediated activation of receptor-type tyrosine kinases, such as PDGFRA, PDGFRB, EGFR, FGFR1, FGFR2, FGFR3 and FGFR4. Plays a role in actin reorganization and cell migration. Guanine nucleotide exchange factor that binds the GTPase DNM1 and catalyzes the dissociation of GDP, allowing a GTP molecule to bind in its place, therefore enhancing DNM1-dependent endocytosis. The polypeptide is 1-phosphatidylinositol 4,5-bisphosphate phosphodiesterase gamma-1 (Mus musculus (Mouse)).